Reading from the N-terminus, the 500-residue chain is ATP synthase subunit beta (500 aa).

157-164 (GGAGVGKT) lines the ATP pocket.

This sequence belongs to the ATPase alpha/beta chains family. As to quaternary structure, F-type ATPases have 2 components, CF(1) - the catalytic core - and CF(0) - the membrane proton channel. CF(1) has five subunits: alpha(3), beta(3), gamma(1), delta(1), epsilon(1). CF(0) has three main subunits: a(1), b(2) and c(9-12). The alpha and beta chains form an alternating ring which encloses part of the gamma chain. CF(1) is attached to CF(0) by a central stalk formed by the gamma and epsilon chains, while a peripheral stalk is formed by the delta and b chains.

Its subcellular location is the cell inner membrane. The enzyme catalyses ATP + H2O + 4 H(+)(in) = ADP + phosphate + 5 H(+)(out). Functionally, produces ATP from ADP in the presence of a proton gradient across the membrane. The catalytic sites are hosted primarily by the beta subunits. The chain is ATP synthase subunit beta from Salinibacter ruber (strain DSM 13855 / M31).